Reading from the N-terminus, the 315-residue chain is Probable cell division protein WhiA (315 aa).

A DNA-binding region (H-T-H motif) is located at residues 280-313 (SLRELGKMLNPPVGKSGVNHRLRRIEKIADELKQ).

The protein belongs to the WhiA family.

Functionally, involved in cell division and chromosome segregation. The polypeptide is Probable cell division protein WhiA (Clostridium botulinum (strain ATCC 19397 / Type A)).